Reading from the N-terminus, the 102-residue chain is Small ribosomal subunit protein uS10 (102 aa).

It belongs to the universal ribosomal protein uS10 family. In terms of assembly, part of the 30S ribosomal subunit.

In terms of biological role, involved in the binding of tRNA to the ribosomes. This Clostridium kluyveri (strain NBRC 12016) protein is Small ribosomal subunit protein uS10.